The primary structure comprises 157 residues: 2-C-methyl-D-erythritol 2,4-cyclodiphosphate synthase (157 aa).

Positions 9 and 11 each coordinate a divalent metal cation. Residues 9–11 (DVH) and 35–36 (HS) each bind 4-CDP-2-C-methyl-D-erythritol 2-phosphate. Histidine 43 provides a ligand contact to a divalent metal cation. 4-CDP-2-C-methyl-D-erythritol 2-phosphate contacts are provided by residues 57–59 (DIG), 62–66 (FPDTD), 101–107 (AEKPKMA), 133–136 (TTTE), phenylalanine 140, and arginine 143.

This sequence belongs to the IspF family. In terms of assembly, homotrimer. It depends on a divalent metal cation as a cofactor.

The catalysed reaction is 4-CDP-2-C-methyl-D-erythritol 2-phosphate = 2-C-methyl-D-erythritol 2,4-cyclic diphosphate + CMP. Its pathway is isoprenoid biosynthesis; isopentenyl diphosphate biosynthesis via DXP pathway; isopentenyl diphosphate from 1-deoxy-D-xylulose 5-phosphate: step 4/6. In terms of biological role, involved in the biosynthesis of isopentenyl diphosphate (IPP) and dimethylallyl diphosphate (DMAPP), two major building blocks of isoprenoid compounds. Catalyzes the conversion of 4-diphosphocytidyl-2-C-methyl-D-erythritol 2-phosphate (CDP-ME2P) to 2-C-methyl-D-erythritol 2,4-cyclodiphosphate (ME-CPP) with a corresponding release of cytidine 5-monophosphate (CMP). This Listeria monocytogenes serotype 4a (strain HCC23) protein is 2-C-methyl-D-erythritol 2,4-cyclodiphosphate synthase.